A 40-amino-acid chain; its full sequence is Small polypeptide DEVIL 6 (40 aa).

The interval Ser-9–Asp-40 is required for DVL/RTFL small polypeptide activity. Residues Arg-12–Ile-28 form a helical membrane-spanning segment.

The protein belongs to the DVL/RTFL small polypeptides family.

The protein localises to the cell membrane. Small polypeptide acting as a regulatory molecule which coordinates cellular responses required for differentiation, growth and development, probably by restricting polar cell proliferation in lateral organs and coordinating socket cell recruitment and differentiation at trichome sites. The polypeptide is Small polypeptide DEVIL 6 (Arabidopsis thaliana (Mouse-ear cress)).